A 157-amino-acid polypeptide reads, in one-letter code: Protein Smg (157 aa).

It belongs to the Smg family.

The protein is Protein Smg of Shigella boydii serotype 18 (strain CDC 3083-94 / BS512).